A 163-amino-acid chain; its full sequence is Small ribosomal subunit protein uS3m (163 aa).

The N-terminal 31 residues, 1 to 31 (MAASLIRQTKLLSVFSSAGCFRSIHSTAACL), are a transit peptide targeting the mitochondrion.

The protein belongs to the universal ribosomal protein uS3 family. As to quaternary structure, component of the mitochondrial ribosome small subunit (28S) which comprises a 12S rRNA and about 30 distinct proteins.

It localises to the mitochondrion. The chain is Small ribosomal subunit protein uS3m (mrps24) from Danio rerio (Zebrafish).